The following is a 931-amino-acid chain: Elicitor of plant defense protein 1 (931 aa).

Positions 13-32 (NYNSVIPPPEPLNTDPDMHP) are disordered. The region spanning 19-277 (PPPEPLNTDP…NLCTEAFNPL (259 aa)) is the uDENN domain. The cDENN domain occupies 301-433 (EIPGSRSIDL…ARRKLMSLLQ (133 aa)). Residues 435–799 (AAPHKLRYGV…DREMQPANNA (365 aa)) enclose the dDENN domain. Disordered regions lie at residues 478 to 552 (LGKW…SRSD) and 566 to 586 (SGHFGEEKMRRSSSFGIDKHP). Polar residues predominate over residues 521 to 537 (TSKSGKTSPQSSVSPVS). Residues 566-575 (SGHFGEEKMR) show a composition bias toward basic and acidic residues. Residues 666 to 714 (GHCFNWIPKDNTSICNICNDHAEGDGIYKCTGCKIFSHGRCLGHASLVC) form a Phorbol-ester/DAG-type zinc finger.

The protein belongs to the EPD1 elicitor family.

Its subcellular location is the secreted. The protein localises to the host cell. Its function is as follows. Acts as an elicitor that triggers cell death and defense responses in the host plants. This chain is Elicitor of plant defense protein 1, found in Fusarium odoratissimum (strain NRRL 54006).